Consider the following 484-residue polypeptide: tRNA sulfurtransferase (484 aa).

The region spanning 61-166 (PHLIELLQCI…DKLLFIQARH (106 aa)) is the THUMP domain. ATP is bound by residues 183–184 (LI), K265, G287, and Q296. An intrachain disulfide couples C344 to C456. In terms of domain architecture, Rhodanese spans 404–483 (LGENDVILDI…FNNVQVFVKA (80 aa)). Residue C456 is the Cysteine persulfide intermediate of the active site.

Belongs to the ThiI family.

It is found in the cytoplasm. It carries out the reaction [ThiI sulfur-carrier protein]-S-sulfanyl-L-cysteine + a uridine in tRNA + 2 reduced [2Fe-2S]-[ferredoxin] + ATP + H(+) = [ThiI sulfur-carrier protein]-L-cysteine + a 4-thiouridine in tRNA + 2 oxidized [2Fe-2S]-[ferredoxin] + AMP + diphosphate. The catalysed reaction is [ThiS sulfur-carrier protein]-C-terminal Gly-Gly-AMP + S-sulfanyl-L-cysteinyl-[cysteine desulfurase] + AH2 = [ThiS sulfur-carrier protein]-C-terminal-Gly-aminoethanethioate + L-cysteinyl-[cysteine desulfurase] + A + AMP + 2 H(+). It participates in cofactor biosynthesis; thiamine diphosphate biosynthesis. Functionally, catalyzes the ATP-dependent transfer of a sulfur to tRNA to produce 4-thiouridine in position 8 of tRNAs, which functions as a near-UV photosensor. Also catalyzes the transfer of sulfur to the sulfur carrier protein ThiS, forming ThiS-thiocarboxylate. This is a step in the synthesis of thiazole, in the thiamine biosynthesis pathway. The sulfur is donated as persulfide by IscS. This chain is tRNA sulfurtransferase, found in Actinobacillus succinogenes (strain ATCC 55618 / DSM 22257 / CCUG 43843 / 130Z).